A 118-amino-acid chain; its full sequence is Small ribosomal subunit protein uS11 (118 aa).

The protein belongs to the universal ribosomal protein uS11 family. In terms of assembly, part of the 30S ribosomal subunit. Interacts with proteins S7 and S18. Binds to IF-3.

Functionally, located on the platform of the 30S subunit, it bridges several disparate RNA helices of the 16S rRNA. Forms part of the Shine-Dalgarno cleft in the 70S ribosome. This chain is Small ribosomal subunit protein uS11, found in Carsonella ruddii (strain PV).